A 507-amino-acid polypeptide reads, in one-letter code: Glucose-6-phosphate isomerase (507 aa).

Glu-337 (proton donor) is an active-site residue. Catalysis depends on residues His-368 and Lys-478.

It belongs to the GPI family.

The protein resides in the cytoplasm. The enzyme catalyses alpha-D-glucose 6-phosphate = beta-D-fructose 6-phosphate. It functions in the pathway carbohydrate biosynthesis; gluconeogenesis. It participates in carbohydrate degradation; glycolysis; D-glyceraldehyde 3-phosphate and glycerone phosphate from D-glucose: step 2/4. Its function is as follows. Catalyzes the reversible isomerization of glucose-6-phosphate to fructose-6-phosphate. The chain is Glucose-6-phosphate isomerase from Novosphingobium aromaticivorans (strain ATCC 700278 / DSM 12444 / CCUG 56034 / CIP 105152 / NBRC 16084 / F199).